A 376-amino-acid polypeptide reads, in one-letter code: uncharacterized protein (376 aa).

The signal sequence occupies residues Met-1–Thr-28. Cys-29 is lipidated: N-palmitoyl cysteine. Residue Cys-29 is the site of S-diacylglycerol cysteine attachment.

The protein belongs to the TP013X lipoprotein family.

It localises to the cell membrane. This is an uncharacterized protein from Treponema pallidum (strain Nichols).